The chain runs to 401 residues: S-adenosylmethionine synthase (401 aa).

137 to 142 provides a ligand contact to ATP; it reads GEGSGD. Residues 272–305 are disordered; it reads GTSAEQGDDGSVGRGNRSNGLITPNRSMSMEATS. Residues 287 to 305 show a composition bias toward polar residues; that stretch reads NRSNGLITPNRSMSMEATS.

Belongs to the AdoMet synthase 2 family. It depends on Mg(2+) as a cofactor.

The enzyme catalyses L-methionine + ATP + H2O = S-adenosyl-L-methionine + phosphate + diphosphate. It functions in the pathway amino-acid biosynthesis; S-adenosyl-L-methionine biosynthesis; S-adenosyl-L-methionine from L-methionine: step 1/1. Its function is as follows. Catalyzes the formation of S-adenosylmethionine from methionine and ATP. This chain is S-adenosylmethionine synthase, found in Natronomonas pharaonis (strain ATCC 35678 / DSM 2160 / CIP 103997 / JCM 8858 / NBRC 14720 / NCIMB 2260 / Gabara) (Halobacterium pharaonis).